We begin with the raw amino-acid sequence, 265 residues long: Tryptophan synthase alpha chain (265 aa).

Catalysis depends on proton acceptor residues glutamate 49 and aspartate 60.

This sequence belongs to the TrpA family. In terms of assembly, tetramer of two alpha and two beta chains.

The enzyme catalyses (1S,2R)-1-C-(indol-3-yl)glycerol 3-phosphate + L-serine = D-glyceraldehyde 3-phosphate + L-tryptophan + H2O. Its pathway is amino-acid biosynthesis; L-tryptophan biosynthesis; L-tryptophan from chorismate: step 5/5. Its function is as follows. The alpha subunit is responsible for the aldol cleavage of indoleglycerol phosphate to indole and glyceraldehyde 3-phosphate. In Cupriavidus metallidurans (strain ATCC 43123 / DSM 2839 / NBRC 102507 / CH34) (Ralstonia metallidurans), this protein is Tryptophan synthase alpha chain.